Consider the following 150-residue polypeptide: SsrA-binding protein (150 aa).

Belongs to the SmpB family.

Its subcellular location is the cytoplasm. Required for rescue of stalled ribosomes mediated by trans-translation. Binds to transfer-messenger RNA (tmRNA), required for stable association of tmRNA with ribosomes. tmRNA and SmpB together mimic tRNA shape, replacing the anticodon stem-loop with SmpB. tmRNA is encoded by the ssrA gene; the 2 termini fold to resemble tRNA(Ala) and it encodes a 'tag peptide', a short internal open reading frame. During trans-translation Ala-aminoacylated tmRNA acts like a tRNA, entering the A-site of stalled ribosomes, displacing the stalled mRNA. The ribosome then switches to translate the ORF on the tmRNA; the nascent peptide is terminated with the 'tag peptide' encoded by the tmRNA and targeted for degradation. The ribosome is freed to recommence translation, which seems to be the essential function of trans-translation. The chain is SsrA-binding protein from Nitratiruptor sp. (strain SB155-2).